A 397-amino-acid chain; its full sequence is MQWPLIAALFTQLYHFVIGDDCYCPLCELDKLPDNCTTIHGHIQMGLESTMPPFEIVEYKLENVTKIVGCITIANSGFTSLSLLSNLEIVQYSQTGNSSTCSSYGNIITIAKNSLLRRLYLTSLKKVILSKKAEYGIYLLDNPSLCITEGELEQFMQTEKFHAPHIQICDPTKNYCRLDNFEFFNDKNIPVGCQVLTDSLVLNGTKEINGLEFQSRLNDIEQILGSITVFESEIASLKFPNLWRVYNFQPDLPVIFLQENGNLSEVEFSNLTSIPYFGNYPDVLYAFSNPLLTNLSLDTCENLNSLGPITFEEVSNSICENRTSSVVPNQDKNRTGNSGGLIVDVEVSGTNSTALSSVGKDGPPENNTKDNSVYRVFDFNLNLSFLFYLLIFQKLFI.

The chain is Protein irld-34 from Caenorhabditis elegans.